The following is a 192-amino-acid chain: Ribosomal RNA small subunit methyltransferase G (192 aa).

S-adenosyl-L-methionine is bound by residues glycine 63, leucine 68, 112–113 (IE), and arginine 125.

It belongs to the methyltransferase superfamily. RNA methyltransferase RsmG family.

The protein localises to the cytoplasm. It carries out the reaction guanosine(527) in 16S rRNA + S-adenosyl-L-methionine = N(7)-methylguanosine(527) in 16S rRNA + S-adenosyl-L-homocysteine. Specifically methylates the N7 position of guanine in position 527 of 16S rRNA. The chain is Ribosomal RNA small subunit methyltransferase G from Rickettsia africae (strain ESF-5).